The following is a 267-amino-acid chain: uncharacterized protein (267 aa).

The tract at residues 72–267 (LTENNNNNNT…EEKKKKKKKK (196 aa)) is disordered. Over residues 122–145 (DSVSSSTTTTIITNNKKINNNNNN) the composition is skewed to low complexity. A compositionally biased stretch (basic and acidic residues) spans 159 to 175 (ENEKSVQKSKKEKESPK). A compositionally biased stretch (low complexity) spans 194 to 218 (SESSSSSSSSSSSESSSSESESSSS).

This is an uncharacterized protein from Dictyostelium discoideum (Social amoeba).